Reading from the N-terminus, the 910-residue chain is Anoctamin-6 (910 aa).

At 1–300 (MKKMSRNVLL…YGEKIGIYFA (300 aa)) the chain is on the cytoplasmic side. Residues 301-321 (WLGYYTQMLLLAAVVGVACFL) traverse the membrane as a helical segment. Residues 322 to 375 (YGYLNQDNCTWSKEVCHPDIGGKIIMCPQCDRLCPFWKLNITCESSKKLCIFDS) lie on the Extracellular side of the membrane. N-linked (GlcNAc...) asparagine glycosylation occurs at N329. 5 disulfides stabilise this stretch: C330–C371, C337–C364, C348–C806, C351–C355, and C595–C600. N361 carries N-linked (GlcNAc...) asparagine glycosylation. The helical transmembrane segment at 376–396 (FGTLVFAVFMGVWVTLFLEFW) threads the bilayer. At 397 to 455 (KRRQAELEYEWDTVELQQEEQARPEYEARCTHVVINEITQEEERIPFTAWGKCIRITLC) the chain is on the cytoplasmic side. A helical membrane pass occupies residues 456–476 (ASAVFFWILLIIASVIGIIVY). Residues 477 to 509 (RLSVFIVFSAKLPKNINGTDPIQKYLTPQTATS) lie on the Extracellular side of the membrane. N493 is a glycosylation site (N-linked (GlcNAc...) asparagine). The chain crosses the membrane as a helical span at residues 510 to 530 (ITASIISFIIIMILNTIYEKV). Residues 531–551 (AIMITNFELPRTQTDYENSLT) lie on the Cytoplasmic side of the membrane. A helical membrane pass occupies residues 552–572 (MKMFLFQFVNYYSSCFYIAFF). The Extracellular portion of the chain corresponds to 573 to 601 (KGKFVGYPGDPVYWLGKYRNEECDPGGCL). Residues 602 to 621 (LELTTQLTIIMGGKAIWNNI) form a helical membrane-spanning segment. The Cytoplasmic segment spans residues 622–663 (QEVLLPWIMNLIGRFHRVSGSEKITPRWEQDYHLQPMGKLGL). The Ca(2+) site is built by E623, E666, and E669. The next 2 helical transmembrane spans lie at 664–684 (FYEY…VASF) and 685–705 (PLAP…DAWK). Residues 706–722 (LTTQFRRLVPEKAQDIG) are Cytoplasmic-facing. A helical transmembrane segment spans residues 723-743 (AWQPIMQGIAILAVVTNAMII). Residues 744–836 (AFTSDMIPRL…YWHVIAAKLA (93 aa)) are Extracellular-facing. 3 N-linked (GlcNAc...) asparagine glycosylation sites follow: N777, N790, and N802. A helical transmembrane segment spans residues 837–857 (FIIVMEHVIYSVKFFISYAIP). Residues 858–910 (DVSKRTKSKIQREKYLTQKLLHENHLKDMTKNMGVIAERMIEAVDNNLRPKSE) lie on the Cytoplasmic side of the membrane.

Belongs to the anoctamin family. Homodimer. In terms of tissue distribution, expressed in embryonic stem cell, fetal liver, retina, chronic myologenous leukemia and intestinal cancer.

It localises to the cell membrane. It catalyses the reaction a 1,2-diacyl-sn-glycero-3-phospho-L-serine(in) = a 1,2-diacyl-sn-glycero-3-phospho-L-serine(out). The enzyme catalyses a beta-D-galactosyl-(1&lt;-&gt;1')-N-acylsphing-4-enine(out) = a beta-D-galactosyl-(1&lt;-&gt;1')-N-acylsphing-4-enine(in). It carries out the reaction a 1,2-diacyl-sn-glycero-3-phosphocholine(in) = a 1,2-diacyl-sn-glycero-3-phosphocholine(out). Exhibits synergistic gating by Ca(2+) and voltage. Inhibited by some non-specific cation channel blockers such as: ruthenium red, 2-aminoethyl diphenylborinate (2APB), gadolinium and cadmium ions. Its activity is regulated as follows. (Microbial infection) Activated by SARS coronavirus-2/SARS-CoV-2 spike protein. In terms of biological role, small-conductance calcium-activated nonselective cation (SCAN) channel which acts as a regulator of phospholipid scrambling in platelets and osteoblasts. Phospholipid scrambling results in surface exposure of phosphatidylserine which in platelets is essential to trigger the clotting system whereas in osteoblasts is essential for the deposition of hydroxyapatite during bone mineralization. Has calcium-dependent phospholipid scramblase activity; scrambles phosphatidylserine, phosphatidylcholine and galactosylceramide. Can generate outwardly rectifying chloride channel currents in airway epithelial cells and Jurkat T lymphocytes. Its function is as follows. (Microbial infection) Upon SARS coronavirus-2/SARS-CoV-2 infection, is activated by spike protein which increases the amplitude of spontaneous Ca(2+) signals and is required for spike-mediated syncytia. This is Anoctamin-6 from Homo sapiens (Human).